A 393-amino-acid polypeptide reads, in one-letter code: 1-deoxy-D-xylulose 5-phosphate reductoisomerase (393 aa).

The NADPH site is built by Thr10, Gly11, Ser12, Ile13, Arg37, Gln38, and Asn124. Residue Lys125 participates in 1-deoxy-D-xylulose 5-phosphate binding. An NADPH-binding site is contributed by Glu126. Asp150 is a binding site for Mn(2+). Residues Ser151, Glu152, Ser179, and His202 each contribute to the 1-deoxy-D-xylulose 5-phosphate site. Glu152 is a binding site for Mn(2+). Gly208 lines the NADPH pocket. 1-deoxy-D-xylulose 5-phosphate-binding residues include Ser215, Asn220, Lys221, and Glu224. Residue Glu224 coordinates Mn(2+).

The protein belongs to the DXR family. Mg(2+) serves as cofactor. Mn(2+) is required as a cofactor.

It catalyses the reaction 2-C-methyl-D-erythritol 4-phosphate + NADP(+) = 1-deoxy-D-xylulose 5-phosphate + NADPH + H(+). Its pathway is isoprenoid biosynthesis; isopentenyl diphosphate biosynthesis via DXP pathway; isopentenyl diphosphate from 1-deoxy-D-xylulose 5-phosphate: step 1/6. In terms of biological role, catalyzes the NADPH-dependent rearrangement and reduction of 1-deoxy-D-xylulose-5-phosphate (DXP) to 2-C-methyl-D-erythritol 4-phosphate (MEP). The sequence is that of 1-deoxy-D-xylulose 5-phosphate reductoisomerase from Cupriavidus taiwanensis (strain DSM 17343 / BCRC 17206 / CCUG 44338 / CIP 107171 / LMG 19424 / R1) (Ralstonia taiwanensis (strain LMG 19424)).